A 322-amino-acid polypeptide reads, in one-letter code: Exosome complex component RRP4 homolog (322 aa).

Residues 94–172 (GDIVVGRVIE…HDGSLQLQAR (79 aa)) enclose the S1 motif domain. Residues 182–237 (GQLLKVDPYLVKRSKHHFHYVESLGIDLIIGCNGFIWVGEHVEVRDPMAIDDQKDE) form the KH domain.

This sequence belongs to the RRP4 family. Component of the RNA exosome complex. Interacts with RPP41. Expressed in roots, stems, rosette and cauline leaves, flowers and siliques.

It localises to the cytoplasm. The protein localises to the nucleus. Its subcellular location is the nucleolus. Non-catalytic component of the RNA exosome complex which has 3'-&gt;5' exoribonuclease activity and participates in a multitude of cellular RNA processing, maturation and degradation events. In vitro, is an active and distributive 3'-&gt;5' exonuclease requiring a free 3'-OH on the substrate and releasing nucleoside 5'-monophosphates. Required for normal embryo development. The polypeptide is Exosome complex component RRP4 homolog (Arabidopsis thaliana (Mouse-ear cress)).